An 88-amino-acid polypeptide reads, in one-letter code: Homeobox protein knotted-1-like 1 (88 aa).

The ELK domain occupies 4–24 (ELKLELKQGFKSRIEDVREEI). Positions 25–88 (LRKRRAGKLP…NQRKRNWHNN (64 aa)) form a DNA-binding region, homeobox; TALE-type.

Belongs to the TALE/KNOX homeobox family. As to expression, highly expressed in the roots.

The protein resides in the nucleus. The polypeptide is Homeobox protein knotted-1-like 1 (KNOX1) (Zea mays (Maize)).